Here is a 284-residue protein sequence, read N- to C-terminus: MLSKQIPLGIYEKALPAGECWLERLRLAKTLGFDFVEMSVDETDARLARLDWSREQRLALVSAVAETGVRVPSMCLSAHRRFPLGSEDDAVRAQGLEIMRKAIQFAQDVGIRVIQLAGYDVYYQQANDETRCRFRDGLKESVDMASRAQVTLAMEIMDYPLMNSISKALGYAHYLNNPWFQLYPDIGNLSAWDNDVQMELQAGIGHIVAVHVKDTKPGVFKNVPFGEGVVDFESCFATLKQSGYCGPYLIEMWSETAENPAAEVAKARDWVKARMASAGLVEAA.

This sequence belongs to the L-ribulose-5-phosphate 3-epimerase family.

It catalyses the reaction L-ribulose 5-phosphate = L-xylulose 5-phosphate. The protein operates within cofactor degradation; L-ascorbate degradation; D-xylulose 5-phosphate from L-ascorbate: step 3/4. Catalyzes the isomerization of L-xylulose-5-phosphate to L-ribulose-5-phosphate. Is involved in the anaerobic L-ascorbate utilization. This is L-ribulose-5-phosphate 3-epimerase UlaE from Salmonella choleraesuis (strain SC-B67).